Here is a 700-residue protein sequence, read N- to C-terminus: Phenylalanine ammonia-lyase hkm12 (700 aa).

The Proton donor/acceptor role is filled by Tyr82. A cross-link (5-imidazolinone (Ala-Gly)) is located at residues 183–185 (ASG). Ser184 bears the 2,3-didehydroalanine (Ser) mark. (E)-cinnamate is bound by residues Asn242, Gln325, Arg331, Asn361, Lys432, Glu460, and Asn463.

It belongs to the PAL/histidase family. Post-translationally, contains an active site 4-methylidene-imidazol-5-one (MIO), which is formed autocatalytically by cyclization and dehydration of residues Ala-Ser-Gly.

It catalyses the reaction L-phenylalanine = (E)-cinnamate + NH4(+). The protein operates within secondary metabolite biosynthesis. Phenylalanine ammonia-lyase; part of the gene cluster that mediates the biosynthesis of hancockiamides, an unusual new family of N-cinnamoylated piperazines. The NRPS hkm10 and the NmrA-like reductase hkm9 are proposed to convert two molecules of L-Phe to the intermediary piperazine called xenocockiamide A. Xenocockiamide A is then converted to hancockiamide D via a series of hydroxylations and O-methylations. The tyrosinase hkm6 may catalyze an aromatic hydroxylation, then the 2-oxoglutarate-dependent Fe(II) dioxygenase hkm4 and the FAD-dependent phenol hydroxylase hkm7 may catalyze consecutive hydroxylations to install 2 more hydroxy groups, and the methyltransferase hkm8 probably catalyzes two methylations using 2 molecules of S-adenosyl-L-methionine (SAM). The NRPS hkm11 activates and transfers trans-cinnamate supplied by the PAL hkm12 to hancockiamide D and produces hancockiamide A. NRPS Hkm11 has the flexibility to tolerate the bulky hancockiamide G as a substrate and the absence of the acetyl-transferase hkm3 opens up the opportunity for hkm11 to introduce a second N-cinnamoyl moiety. The cytochrome P450 monooxygenase hkm5 catalyzes the methylenedioxy bridge formation, converting hancockiamide A into hancockiamide G. Hkm5 can also convert hancockiamide B into hancockiamide C, and hancockiamide D into hancockiamide H. The N-acetyltransferase hkm3 finally transfers an acetyl group to 1-N of piperazine, converting hancockiamide A into hancockiamide B and hancockiamide G into hancockiamide C. This chain is Phenylalanine ammonia-lyase hkm12, found in Aspergillus hancockii.